Here is an 802-residue protein sequence, read N- to C-terminus: DEAD-box ATP-dependent RNA helicase 28 (802 aa).

The segment at 1-179 is disordered; that stretch reads MDADFRFDPD…TDKKSGVVDP (179 aa). Acidic residues-rich tracts occupy residues 76–131 and 138–169; these read GDSE…EELE and KSDE…EEEE. Coiled coils occupy residues 90-122 and 149-174; these read DSEE…GVEV and QDGE…DKKS. The short motif at 194 to 222 is the Q motif element; sequence NSFLELNLSRPLLRACEALGYQKPTPIQA. One can recognise a Helicase ATP-binding domain in the interval 225-399; sequence IPLALTGRDI…TLSLNKPVRL (175 aa). 238–245 contacts ATP; the sequence is AITGSGKT. Residues 347-350 carry the DEAD box motif; it reads DEAD. Positions 429–573 constitute a Helicase C-terminal domain; sequence VLLALCLKTF…SRIVAEKPVA (145 aa). The stretch at 572 to 616 forms a coiled coil; that stretch reads VAECAKLIEELEDQISTIIQEEREERILRKAEMEATKAENMIAHK. Residues 639–802 are disordered; the sequence is KAAKESTSQG…KSKSRYNRRK (164 aa). The segment covering 644 to 659 has biased composition (polar residues); it reads STSQGKSNSGVISAQQ. Residues 666 to 684 show a composition bias toward basic residues; sequence KEKKRREREKNLPRKKRRR. Residues 671-712 are a coiled coil; sequence REREKNLPRKKRRRLEAEREMLEDESEDEEEAKESKGGKKEK. Acidic residues predominate over residues 691 to 702; the sequence is MLEDESEDEEEA. The segment covering 776–802 has biased composition (basic residues); it reads RSLKKNNVMRKKSKNSFKSKSRYNRRK.

Belongs to the DEAD box helicase family. DDX27/DRS1 subfamily.

It catalyses the reaction ATP + H2O = ADP + phosphate + H(+). This chain is DEAD-box ATP-dependent RNA helicase 28, found in Oryza sativa subsp. japonica (Rice).